Reading from the N-terminus, the 361-residue chain is tRNA 2-selenouridine synthase (361 aa).

The 124-residue stretch at 11–134 (LLADTPLIDV…LRQTAIQATW (124 aa)) folds into the Rhodanese domain. Cys-94 (S-selanylcysteine intermediate) is an active-site residue.

Belongs to the SelU family. In terms of assembly, monomer.

It catalyses the reaction 5-methylaminomethyl-2-thiouridine(34) in tRNA + selenophosphate + (2E)-geranyl diphosphate + H2O + H(+) = 5-methylaminomethyl-2-selenouridine(34) in tRNA + (2E)-thiogeraniol + phosphate + diphosphate. It carries out the reaction 5-methylaminomethyl-2-thiouridine(34) in tRNA + (2E)-geranyl diphosphate = 5-methylaminomethyl-S-(2E)-geranyl-thiouridine(34) in tRNA + diphosphate. The catalysed reaction is 5-methylaminomethyl-S-(2E)-geranyl-thiouridine(34) in tRNA + selenophosphate + H(+) = 5-methylaminomethyl-2-(Se-phospho)selenouridine(34) in tRNA + (2E)-thiogeraniol. The enzyme catalyses 5-methylaminomethyl-2-(Se-phospho)selenouridine(34) in tRNA + H2O = 5-methylaminomethyl-2-selenouridine(34) in tRNA + phosphate. Involved in the post-transcriptional modification of the uridine at the wobble position (U34) of tRNA(Lys), tRNA(Glu) and tRNA(Gln). Catalyzes the conversion of 2-thiouridine (S2U-RNA) to 2-selenouridine (Se2U-RNA). Acts in a two-step process involving geranylation of 2-thiouridine (S2U) to S-geranyl-2-thiouridine (geS2U) and subsequent selenation of the latter derivative to 2-selenouridine (Se2U) in the tRNA chain. The protein is tRNA 2-selenouridine synthase of Salmonella schwarzengrund (strain CVM19633).